The sequence spans 673 residues: Armadillo repeat-containing protein 8 (673 aa).

ARM repeat units follow at residues 51-92, 95-134, 138-176, 178-217, 225-265, 269-309, 313-352, 374-413, 416-455, 458-497, 501-540, 543-585, 588-627, and 634-673; these read NKQK…SLSM, ENNI…TVFI, TPVQ…HCCK, PEHQ…VLAY, TLVN…YMCR, IRTE…YLME, ELQR…HDLK, DIRK…SLSR, QQLR…NLLL, SPSK…NMAF, QKVK…NLLS, PHID…NIAD, TAKE…NLIW, and QERQ…QYLA.

As to quaternary structure, identified in the CTLH complex that contains at least MAEA, RMND5A (or alternatively its paralog RMND5B), GID8, WDR26, and RANBP9 and/or RANBP10; ARMC8 has an ancillary role in the complex.

It localises to the nucleus. The protein resides in the cytoplasm. Functionally, component of the CTLH E3 ubiquitin-protein ligase complex that mediates ubiquitination and subsequent proteasomal degradation of target proteins. In Danio rerio (Zebrafish), this protein is Armadillo repeat-containing protein 8 (armc8).